The primary structure comprises 124 residues: UPF0357 protein C1687.07 (124 aa).

An N-terminal signal peptide occupies residues 1-24; that stretch reads MASFHIIVSYVTVVLAIIIAITFA.

This sequence belongs to the UPF0357 family.

This is UPF0357 protein C1687.07 from Schizosaccharomyces pombe (strain 972 / ATCC 24843) (Fission yeast).